We begin with the raw amino-acid sequence, 1085 residues long: DNA-directed RNA polymerase subunit beta (1085 aa).

Belongs to the RNA polymerase beta chain family. As to quaternary structure, in plastids the minimal PEP RNA polymerase catalytic core is composed of four subunits: alpha, beta, beta', and beta''. When a (nuclear-encoded) sigma factor is associated with the core the holoenzyme is formed, which can initiate transcription.

The protein resides in the plastid. It is found in the chloroplast. The catalysed reaction is RNA(n) + a ribonucleoside 5'-triphosphate = RNA(n+1) + diphosphate. Its function is as follows. DNA-dependent RNA polymerase catalyzes the transcription of DNA into RNA using the four ribonucleoside triphosphates as substrates. This chain is DNA-directed RNA polymerase subunit beta, found in Physcomitrium patens (Spreading-leaved earth moss).